Here is a 499-residue protein sequence, read N- to C-terminus: Aspartyl/glutamyl-tRNA(Asn/Gln) amidotransferase subunit B (499 aa).

This sequence belongs to the GatB/GatE family. GatB subfamily. In terms of assembly, heterotrimer of A, B and C subunits.

It carries out the reaction L-glutamyl-tRNA(Gln) + L-glutamine + ATP + H2O = L-glutaminyl-tRNA(Gln) + L-glutamate + ADP + phosphate + H(+). The enzyme catalyses L-aspartyl-tRNA(Asn) + L-glutamine + ATP + H2O = L-asparaginyl-tRNA(Asn) + L-glutamate + ADP + phosphate + 2 H(+). Allows the formation of correctly charged Asn-tRNA(Asn) or Gln-tRNA(Gln) through the transamidation of misacylated Asp-tRNA(Asn) or Glu-tRNA(Gln) in organisms which lack either or both of asparaginyl-tRNA or glutaminyl-tRNA synthetases. The reaction takes place in the presence of glutamine and ATP through an activated phospho-Asp-tRNA(Asn) or phospho-Glu-tRNA(Gln). In Bifidobacterium animalis subsp. lactis (strain AD011), this protein is Aspartyl/glutamyl-tRNA(Asn/Gln) amidotransferase subunit B.